The sequence spans 775 residues: Polyribonucleotide nucleotidyltransferase (775 aa).

Residues 223–247 (DEQVPEKPRKGRRRGRKSSPRKKTD) are disordered. Over residues 231–243 (RKGRRRGRKSSPR) the composition is skewed to basic residues. 2 residues coordinate Mg(2+): Asp-567 and Asp-573. The KH domain maps to 633–692 (PRITTISVPVSKIGEVIGPKGKNINQITEDTGARVSIEDDGTVFISATSGGSAEAAVDRI). The 70-residue stretch at 704–773 (GERFLGTVVK…NRGKISLVPV (70 aa)) folds into the S1 motif domain.

This sequence belongs to the polyribonucleotide nucleotidyltransferase family. It depends on Mg(2+) as a cofactor.

The protein localises to the cytoplasm. It catalyses the reaction RNA(n+1) + phosphate = RNA(n) + a ribonucleoside 5'-diphosphate. In terms of biological role, involved in mRNA degradation. Catalyzes the phosphorolysis of single-stranded polyribonucleotides processively in the 3'- to 5'-direction. The protein is Polyribonucleotide nucleotidyltransferase of Corynebacterium kroppenstedtii (strain DSM 44385 / JCM 11950 / CIP 105744 / CCUG 35717).